Consider the following 309-residue polypeptide: D-alanine--D-alanine ligase (309 aa).

An ATP-grasp domain is found at Lys99–Asp304. Residue Leu132–Thr187 participates in ATP binding. Residues Asp258, Glu271, and Asn273 each coordinate Mg(2+).

The protein belongs to the D-alanine--D-alanine ligase family. Requires Mg(2+) as cofactor. Mn(2+) serves as cofactor.

Its subcellular location is the cytoplasm. The enzyme catalyses 2 D-alanine + ATP = D-alanyl-D-alanine + ADP + phosphate + H(+). Its pathway is cell wall biogenesis; peptidoglycan biosynthesis. In terms of biological role, cell wall formation. The polypeptide is D-alanine--D-alanine ligase (Moorella thermoacetica (strain ATCC 39073 / JCM 9320)).